Reading from the N-terminus, the 493-residue chain is UDP-N-acetylmuramoyl-L-alanyl-D-glutamate--L-lysine ligase (493 aa).

Ser30 contacts UDP-N-acetyl-alpha-D-muramoyl-L-alanyl-D-glutamate. 110–116 (GTNGKTS) is a binding site for ATP. Residues Asn151, 152 to 153 (TT), Ser179, and Arg187 contribute to the UDP-N-acetyl-alpha-D-muramoyl-L-alanyl-D-glutamate site. Lys219 carries the N6-carboxylysine modification. Residues 406 to 409 (DNPA) carry the L-lysine recognition motif motif.

This sequence belongs to the MurCDEF family. MurE subfamily. The cofactor is Mg(2+). Carboxylation is probably crucial for Mg(2+) binding and, consequently, for the gamma-phosphate positioning of ATP.

The protein resides in the cytoplasm. The catalysed reaction is UDP-N-acetyl-alpha-D-muramoyl-L-alanyl-D-glutamate + L-lysine + ATP = UDP-N-acetyl-alpha-D-muramoyl-L-alanyl-gamma-D-glutamyl-L-lysine + ADP + phosphate + H(+). It participates in cell wall biogenesis; peptidoglycan biosynthesis. Catalyzes the addition of L-lysine to the nucleotide precursor UDP-N-acetylmuramoyl-L-alanyl-D-glutamate (UMAG) in the biosynthesis of bacterial cell-wall peptidoglycan. Cannot use diaminopimelate as substrate. Can accept L-ornithine as substrate, but the efficiency is 400-fold lower than that with L-lysine. Seems to have a role in beta-lactam antibiotic resistance. The chain is UDP-N-acetylmuramoyl-L-alanyl-D-glutamate--L-lysine ligase from Staphylococcus aureus (strain NCTC 8325 / PS 47).